Reading from the N-terminus, the 292-residue chain is MFTGSIVALVTPMDENGNVCRTSLKKLIDYHVANGTSAIVSVGTTGESATLSHEEHGDVVMMTLELADGRIPVIAGTGANATAEAISLTKRFNDSGVVGCLTVTPYYNRPTQEGLFQHFKAIAEHTDLPQILYNVPSRTGCDMLPETVGRLAEIKNIVGIKEATGNLSRVHQIKELVSDDFILLSGDDATGMDFMQLGGVGVISVTANVAAREMADMCRLALAGQFAEARAINQRLMPLHTKLFVEPNPIPVKWGCKALGLVATDTLRLPMTPITDHGREAVTAALKHAGLL.

Threonine 45 contacts pyruvate. Tyrosine 133 functions as the Proton donor/acceptor in the catalytic mechanism. The active-site Schiff-base intermediate with substrate is lysine 161. Isoleucine 203 is a pyruvate binding site.

The protein belongs to the DapA family. As to quaternary structure, homotetramer; dimer of dimers.

It localises to the cytoplasm. The enzyme catalyses L-aspartate 4-semialdehyde + pyruvate = (2S,4S)-4-hydroxy-2,3,4,5-tetrahydrodipicolinate + H2O + H(+). It participates in amino-acid biosynthesis; L-lysine biosynthesis via DAP pathway; (S)-tetrahydrodipicolinate from L-aspartate: step 3/4. In terms of biological role, catalyzes the condensation of (S)-aspartate-beta-semialdehyde [(S)-ASA] and pyruvate to 4-hydroxy-tetrahydrodipicolinate (HTPA). The sequence is that of 4-hydroxy-tetrahydrodipicolinate synthase from Klebsiella pneumoniae subsp. pneumoniae (strain ATCC 700721 / MGH 78578).